A 674-amino-acid chain; its full sequence is Leucine-rich repeat transmembrane protein FLRT1 (674 aa).

An N-terminal signal peptide occupies residues 1 to 51 (MVVAHSAATATTTPAATVTATVVMTTATMDLRDWLFLCYGLIAFLTEVIDS). Residues 52 to 552 (TTCPSVCRCD…QNAGPMAGLP (501 aa)) lie on the Extracellular side of the membrane. Disulfide bonds link cysteine 54/cysteine 60 and cysteine 58/cysteine 67. The LRRNT domain maps to 54 to 80 (CPSVCRCDNGFIYCNDRGLTSIPSDIP). LRR repeat units follow at residues 81–105 (DDAT…LKTK), 106–126 (VKVQ…INLP), 127–149 (RSLR…SLAR), 151–175 (PLLE…AFAD), 176–197 (SKQL…SGLP), 198–220 (HTLE…AFKG), 222–246 (NSLR…TFSR), 247–269 (LQNL…NLPS), 270–292 (AHLQ…TLAK), and 293–316 (MREL…LFDD). Asparagine 305 is a glycosylation site (N-linked (GlcNAc...) asparagine). An LRRCT domain is found at 328 to 379 (NPWFCGCNLMWLRDWVRARAAVVNVRGLMCQGPEKVRGMAIKDITSEMDECF). Residues cysteine 332 and cysteine 357 are joined by a disulfide bond. A Fibronectin type-III domain is found at 437 to 532 (KTLVIQVKPL…VCAKAETADS (96 aa)). Residues 553 to 573 (LAGIIGGAVALVFLFLVLGAI) traverse the membrane as a helical segment. At 574-674 (CWYVHRAGEL…GIPDVDYSYT (101 aa)) the chain is on the cytoplasmic side. A phosphotyrosine mark is found at tyrosine 600, tyrosine 633, and tyrosine 671.

In terms of assembly, interacts with FGFR1. Interacts (via extracellular domain) with ADGRL1/LPHN1 and ADGRL3 (via olfactomedin-like domain). In terms of processing, phosphorylated in response to FGFR1 signaling, but is not a direct substrate of FGFR1 or SRC. A mutant where the Tyr phosphorylation sites have been replaced by Phe displays constitutive FGFR1-dependent activation of downstream MAP kinases. N-glycosylated. Post-translationally, proteolytic cleavage in the juxtamembrane region gives rise to a soluble ectodomain. As to expression, detected in brain (at protein level).

The protein resides in the cell membrane. It is found in the endoplasmic reticulum membrane. The protein localises to the cytoplasmic vesicle membrane. Its subcellular location is the cytoplasm. It localises to the perinuclear region. The protein resides in the cell junction. It is found in the focal adhesion. The protein localises to the secreted. Its subcellular location is the cell projection. It localises to the neuron projection. Functionally, plays a role in fibroblast growth factor-mediated signaling cascades that lead to the activation of MAP kinases. Promotes neurite outgrowth via FGFR1-mediated activation of downstream MAP kinases. Promotes an increase both in neurite number and in neurite length. May play a role in cell-cell adhesion and cell guidance via its interaction with ADGRL1/LPHN1 and ADGRL3. This is Leucine-rich repeat transmembrane protein FLRT1 from Mus musculus (Mouse).